A 161-amino-acid polypeptide reads, in one-letter code: Efficient mitochondria targeting-associated protein 19 (161 aa).

The Cytoplasmic segment spans residues 1 to 10; sequence MKLGHREQQF. One can recognise an EXPERA domain in the interval 7–159; sequence EQQFYLWYFI…PTFLIPLRLC (153 aa). Residues 11-31 traverse the membrane as a helical segment; it reads YLWYFIVHIPITIFIDSSVVI. The Lumenal segment spans residues 32-61; the sequence is PAKWQLGIAQKVVSDHIAKQHDFLLSEKPE. Residues 62-82 traverse the membrane as a helical segment; it reads WLYWFVVLELVLQLPLFVYFV. At 83–101 the chain is on the cytoplasmic side; that stretch reads NKFWNSSELQVNTNSRLKK. The chain crosses the membrane as a helical span at residues 102–122; sequence WLRIYGWNASLTTLICIVVIF. The Lumenal segment spans residues 123 to 141; sequence KRGYIPYDVLKTSLSMTQK. A helical membrane pass occupies residues 142–160; sequence CQLASVYLPTFLIPLRLCF. Residue Val-161 is a topological domain, cytoplasmic.

This sequence belongs to the TMEM97/sigma-2 receptor family.

It localises to the endoplasmic reticulum membrane. Part of an import route for newly synthesized mitochondrial proteins termed the ER-SURF pathway (ER surface-mediated protein targeting), which retrieves mitochondrial precursor proteins from the ER surface and reroutes them to mitochondria for efficient mitochondrial import. Acts as a quality control factor in the ER, promoting the proteolytic degradation of nonproductive and extramitochondrial precursor proteins in the ER membrane thus removing them from the ER surface. This chain is Efficient mitochondria targeting-associated protein 19, found in Saccharomyces cerevisiae (strain ATCC 204508 / S288c) (Baker's yeast).